Here is a 561-residue protein sequence, read N- to C-terminus: Arginine--tRNA ligase (561 aa).

The short motif at 129–139 (ANPTGPLHVGH) is the 'HIGH' region element.

The protein belongs to the class-I aminoacyl-tRNA synthetase family. Monomer.

The protein localises to the cytoplasm. The catalysed reaction is tRNA(Arg) + L-arginine + ATP = L-arginyl-tRNA(Arg) + AMP + diphosphate. This chain is Arginine--tRNA ligase, found in Bordetella bronchiseptica (strain ATCC BAA-588 / NCTC 13252 / RB50) (Alcaligenes bronchisepticus).